The chain runs to 339 residues: Anthranilate phosphoribosyltransferase (339 aa).

Residues Gly-80, 83 to 84, Thr-88, 90 to 93, 108 to 116, and Ser-120 each bind 5-phospho-alpha-D-ribose 1-diphosphate; these read GD, NIST, and KHGNRAMSS. Gly-80 lines the anthranilate pocket. Ser-92 provides a ligand contact to Mg(2+). Asn-111 is a binding site for anthranilate. Residue Arg-166 coordinates anthranilate. The Mg(2+) site is built by Asp-225 and Glu-226.

Belongs to the anthranilate phosphoribosyltransferase family. As to quaternary structure, homodimer. It depends on Mg(2+) as a cofactor.

It carries out the reaction N-(5-phospho-beta-D-ribosyl)anthranilate + diphosphate = 5-phospho-alpha-D-ribose 1-diphosphate + anthranilate. Its pathway is amino-acid biosynthesis; L-tryptophan biosynthesis; L-tryptophan from chorismate: step 2/5. Catalyzes the transfer of the phosphoribosyl group of 5-phosphorylribose-1-pyrophosphate (PRPP) to anthranilate to yield N-(5'-phosphoribosyl)-anthranilate (PRA). The sequence is that of Anthranilate phosphoribosyltransferase from Chloroflexus aurantiacus (strain ATCC 29366 / DSM 635 / J-10-fl).